The primary structure comprises 76 residues: High-potential iron-sulfur protein isozyme 2 (76 aa).

Positions 38, 41, 54, and 70 each coordinate [4Fe-4S] cluster.

It belongs to the high-potential iron-sulfur protein (HiPIP) family. Homodimer.

Functionally, specific class of high-redox-potential 4Fe-4S ferredoxins. Functions in anaerobic electron transport in most purple and in some other photosynthetic bacteria and in at least one genus (Paracoccus) of halophilic, denitrifying bacteria. This Halorhodospira halophila (Ectothiorhodospira halophila) protein is High-potential iron-sulfur protein isozyme 2 (hip2).